We begin with the raw amino-acid sequence, 330 residues long: Poly(3-hydroxyalkanoate) polymerase subunit PhaE (330 aa).

A coiled-coil region spans residues 298-328 (RSEVDEIHQTIYQLRKEVKSLKKRLGETEAN).

It belongs to the PHA/PHB synthase family. Type III PhaE subfamily. Forms a heterodimer with PhaC, which may multimerize in the presence of 3-hydroxybutyryl-CoA. Both subunits are required for PHB synthesis in E.coli and in PHA-negative A.eutrophus.

It localises to the cytoplasm. It participates in biopolymer metabolism; poly-(R)-3-hydroxybutanoate biosynthesis. In terms of biological role, when expressed in E.coli with Synechocystis PhaC and C.necator PhaA and PhaB, confers the ability to synthesize up to 13% (w/w) poly(3-hydroxybutyrate) (PHB) depending on the carbon source; all 4 genes are necessary for PHB production. Cell-free in vitro coexpression with PhaE gives a heterodimer able to polymerize 3-hydroxybutyrate-CoA. This subunit has no catalytic activity but enhances the activity of PhaC, the catalytic subunit. In Synechocystis sp. (strain ATCC 27184 / PCC 6803 / Kazusa), this protein is Poly(3-hydroxyalkanoate) polymerase subunit PhaE.